An 85-amino-acid polypeptide reads, in one-letter code: Translation initiation factor IF-1 (85 aa).

The region spanning 1–72 is the S1-like domain; that stretch reads MAKEELLEMR…TKARITYRFM (72 aa).

Belongs to the IF-1 family. Component of the 30S ribosomal translation pre-initiation complex which assembles on the 30S ribosome in the order IF-2 and IF-3, IF-1 and N-formylmethionyl-tRNA(fMet); mRNA recruitment can occur at any time during PIC assembly.

It is found in the cytoplasm. In terms of biological role, one of the essential components for the initiation of protein synthesis. Stabilizes the binding of IF-2 and IF-3 on the 30S subunit to which N-formylmethionyl-tRNA(fMet) subsequently binds. Helps modulate mRNA selection, yielding the 30S pre-initiation complex (PIC). Upon addition of the 50S ribosomal subunit IF-1, IF-2 and IF-3 are released leaving the mature 70S translation initiation complex. The polypeptide is Translation initiation factor IF-1 (Erythrobacter litoralis (strain HTCC2594)).